Here is a 212-residue protein sequence, read N- to C-terminus: KxDL motif-containing protein CG10681 (212 aa).

A disordered region spans residues 128 to 159; that stretch reads RSSLAEEAEDDTEAQAKKTAETPAPAAAKPVL. Over residues 148–157 the composition is skewed to low complexity; that stretch reads ETPAPAAAKP.

This sequence belongs to the KXD1 family.

The protein is KxDL motif-containing protein CG10681 of Drosophila melanogaster (Fruit fly).